The following is a 534-amino-acid chain: uncharacterized protein (534 aa).

The next 5 helical transmembrane spans lie at 4–22 (ILVL…RVSF), 24–46 (GISL…GWTI), 56–75 (ALFV…RGLA), 82–104 (AITG…RLLG), and 134–156 (PAAV…VLFV). The interval 167–187 (GDSDGTDSASETSGQSSAEIA) is disordered. A compositionally biased stretch (polar residues) spans 172–187 (TDSASETSGQSSAEIA). 2 RCK C-terminal domains span residues 180–264 (GQSS…TLGE) and 265–349 (LQDT…AVGH). The next 6 membrane-spanning stretches (helical) occupy residues 359 to 378 (LLSL…LSLQ), 382 to 401 (FSMS…ILGH), 408 to 430 (IRGS…LFLA), 445 to 467 (MERG…LVGF), 479 to 501 (WQSL…LTGA), and 511 to 533 (YVAA…VELI).

Belongs to the AAE transporter (TC 2.A.81) family.

The protein localises to the cell membrane. This is an uncharacterized protein from Rhodopirellula baltica (strain DSM 10527 / NCIMB 13988 / SH1).